The following is a 603-amino-acid chain: Terpenoid synthase 22 (603 aa).

Residues aspartate 356, aspartate 360, asparagine 500, and glutamate 508 each coordinate Mg(2+). A DDXXD motif motif is present at residues 356–360 (DDTCD).

The protein belongs to the terpene synthase family. Tpsa subfamily. Mg(2+) is required as a cofactor. Requires Mn(2+) as cofactor. In terms of tissue distribution, predominantly expressed in siliques but also in flowers.

It is found in the cytoplasm. It participates in secondary metabolite biosynthesis; terpenoid biosynthesis. In terms of biological role, involved in terpene biosynthesis in roots. Possesses sesquiterpene (C15) synthase activity in vitro. Does not seem to be involved in diterpene (C20) biosynthesis. In Arabidopsis thaliana (Mouse-ear cress), this protein is Terpenoid synthase 22.